Consider the following 347-residue polypeptide: 3',5'-bisphosphate nucleotidase 2 (347 aa).

Asp-46 serves as the catalytic Proton acceptor. Mg(2+) is bound by residues Glu-71, Asp-134, Ile-136, and Asp-137. Thr-139 acts as the Proton acceptor in catalysis. Positions 139, 255, 258, 272, and 284 each coordinate adenosine 3',5'-bisphosphate. Residues Ser-255, Lys-258, Arg-272, and Asp-284 each coordinate AMP. Asp-284 is a binding site for Mg(2+).

This sequence belongs to the inositol monophosphatase superfamily. Mg(2+) is required as a cofactor. Very low expression in roots, leaves, stems, flowers and siliques.

The enzyme catalyses adenosine 3',5'-bisphosphate + H2O = AMP + phosphate. The catalysed reaction is 3'-phosphoadenylyl sulfate + H2O = adenosine 5'-phosphosulfate + phosphate. It catalyses the reaction 1D-myo-inositol 1,4-bisphosphate + H2O = 1D-myo-inositol 4-phosphate + phosphate. It functions in the pathway signal transduction; phosphatidylinositol signaling pathway. Inhibited by Li(+) (IC(50)=10 mM), Na(+) (IC(50)=200 mM) and Ca(2+) (IC(50)=0.03 mM). Phosphatase that converts adenosine 3'-phosphate 5'-phosphosulfate (PAPS) to adenosine 5'-phosphosulfate (APS) and 3'-phosphoadenosine 5'-phosphate (3'-PAP) to AMP. May regulate the flux of sulfur in the sulfur-activation pathway by converting PAPS to APS. Prevents both the toxicity of PAP on RNA processing enzymes as well as the product inhibition by PAP of sulfate conjugation. Is also able to hydrolyze inositol 1,4-bisphosphate. This is 3',5'-bisphosphate nucleotidase 2 from Arabidopsis thaliana (Mouse-ear cress).